Reading from the N-terminus, the 38-residue chain is Photosystem II reaction center protein L (38 aa).

The helical transmembrane segment at 17–37 (SLYWGLLLIFVLAVSFSNYFF) threads the bilayer.

It belongs to the PsbL family. As to quaternary structure, PSII is composed of 1 copy each of membrane proteins PsbA, PsbB, PsbC, PsbD, PsbE, PsbF, PsbH, PsbI, PsbJ, PsbK, PsbL, PsbM, PsbT, PsbX, PsbY, PsbZ, Psb30/Ycf12, at least 3 peripheral proteins of the oxygen-evolving complex and a large number of cofactors. It forms dimeric complexes.

It is found in the plastid membrane. In terms of biological role, one of the components of the core complex of photosystem II (PSII). PSII is a light-driven water:plastoquinone oxidoreductase that uses light energy to abstract electrons from H(2)O, generating O(2) and a proton gradient subsequently used for ATP formation. It consists of a core antenna complex that captures photons, and an electron transfer chain that converts photonic excitation into a charge separation. This subunit is found at the monomer-monomer interface and is required for correct PSII assembly and/or dimerization. The protein is Photosystem II reaction center protein L of Aneura mirabilis (Parasitic liverwort).